Reading from the N-terminus, the 732-residue chain is Small conductance calcium-activated potassium channel protein 3 (732 aa).

Positions 1-11 (MDTSGHFHDSG) are enriched in basic and acidic residues. Disordered stretches follow at residues 1–82 (MDTS…QQAP) and 119–161 (AILH…QASP). Over residues 35-61 (QPPPPPAPPAVPQQPPGPLLQPQPPQP) the composition is skewed to pro residues. Positions 62 to 82 (QQQQSQQQQQQQSQQQQQQAP) are enriched in low complexity. Residues 119–133 (AILHPSSRQGSQLNL) are compositionally biased toward polar residues. A compositionally biased stretch (low complexity) spans 139–148 (GHSPSSTATS). A Phosphoserine modification is found at serine 168. Residues 241–257 (THNHQHAGTTAGSTTFP) show a composition bias toward polar residues. Residues 241–260 (THNHQHAGTTAGSTTFPKAN) are disordered. Residues 289–309 (LIFGMFGIVVMVIETELSWGL) traverse the membrane as a helical segment. Residues 316 to 336 (FSLALKCLISLSTVILLGLII) form a helical membrane-spanning segment. The chain crosses the membrane as a helical span at residues 367–387 (ISLEMLVCAIHPIPGEYKFFW). Residues 406–426 (IILSIPMFLRLYLIARVMLLH) traverse the membrane as a helical segment. The helical transmembrane segment at 455–475 (LMTICPGTVLLVFSISLWIIA) threads the bilayer. Residues 495-515 (FLGAMWLISITFLSIGYGDMV) constitute an intramembrane region (pore-forming). A helical transmembrane segment spans residues 524–544 (VCLLTGIMGAGCTALVVAVVA). The tract at residues 562-638 (DTQLTKRIKN…LVDLSKMQNV (77 aa)) is calmodulin-binding. Residues 643 to 670 (ITELNDRSEDLEKQIGSLESKLEHLTAS) adopt a coiled-coil conformation. The segment at 704–732 (GTSHAPPSDSPIGISSTSFPTPYTSSSSC) is disordered. Residues 718–732 (SSTSFPTPYTSSSSC) are compositionally biased toward low complexity.

It belongs to the potassium channel KCNN family. KCa2.3/KCNN3 subfamily. In terms of assembly, homodimer. Heteromultimer with KCNN2 or KCNN1; this modulates plasma membrane expression and consequently the small conductance calcium-activated potassium channel activity. The complex is composed of 4 channel subunits each of which binds to a calmodulin subunit which regulates the channel activity through calcium-binding. Interacts with CALM1. Expressed at low levels in atrial and ventricular myocytes (at protein level).

The protein localises to the cell membrane. Its subcellular location is the cytoplasm. It is found in the myofibril. The protein resides in the sarcomere. It localises to the z line. The enzyme catalyses K(+)(in) = K(+)(out). Its activity is regulated as follows. Inhibited by bee venom neurotoxin apamin. Its function is as follows. Small conductance calcium-activated potassium channel that mediates the voltage-independent transmembrane transfer of potassium across the cell membrane through a constitutive interaction with calmodulin which binds the intracellular calcium allowing its opening. The current is characterized by a voltage-independent activation, an intracellular calcium concentration increase-dependent activation and a single-channel conductance of 10 picosiemens. Also presents an inwardly rectifying current, thus reducing its already small outward conductance of potassium ions, which is particularly the case when the membrane potential displays positive values, above + 20 mV. Activation is followed by membrane hyperpolarization. Thought to regulate neuronal excitability by contributing to the slow component of synaptic afterhyperpolarization. The protein is Small conductance calcium-activated potassium channel protein 3 of Mus musculus (Mouse).